The chain runs to 1765 residues: Sodium channel protein type 11 subunit alpha (1765 aa).

Residues Met-1–Ser-126 lie on the Cytoplasmic side of the membrane. An I repeat occupies Phe-115 to Arg-406. Residues Val-127 to Asn-148 traverse the membrane as a helical segment. N-linked (GlcNAc...) asparagine glycosylation is present at Asn-149. Residues Asn-149–Asn-159 lie on the Extracellular side of the membrane. A helical membrane pass occupies residues Ile-160–Ala-179. Residues Arg-180–Arg-191 are Cytoplasmic-facing. Residues Asp-192–Leu-211 traverse the membrane as a helical segment. Over Gly-212–Ser-219 the chain is Extracellular. N-linked (GlcNAc...) asparagine glycosylation occurs at Asn-217. A helical; Voltage-sensor transmembrane segment spans residues Thr-220–Leu-239. Topologically, residues Lys-240–Asp-255 are cytoplasmic. A helical transmembrane segment spans residues Val-256–Leu-269. At Val-270–Ser-342 the chain is on the extracellular side. A disulfide bond links Cys-283 and Cys-320. N-linked (GlcNAc...) asparagine glycosylation is found at Asn-303, Asn-327, and Asn-336. Residues Phe-343–Leu-367 constitute an intramembrane region (pore-forming). Residues Arg-368–Phe-374 lie on the Extracellular side of the membrane. Residues Val-375–Ala-400 form a helical membrane-spanning segment. The Cytoplasmic portion of the chain corresponds to Tyr-401–Thr-570. The disordered stretch occupies residues Arg-470–Pro-490. An II repeat occupies Cys-557–Gln-821. A helical transmembrane segment spans residues Ile-571–Met-594. Topologically, residues Glu-595–Asp-605 are extracellular. The chain crosses the membrane as a helical span at residues Ile-606–Leu-629. The Cytoplasmic portion of the chain corresponds to Asp-630–His-637. Residues Gly-638–Leu-659 form a helical membrane-spanning segment. Topologically, residues Ser-660 to Ser-664 are extracellular. Residue Asn-662 is glycosylated (N-linked (GlcNAc...) asparagine). The chain crosses the membrane as a helical; Voltage-sensor span at residues Phe-665 to Leu-684. The Cytoplasmic portion of the chain corresponds to Asn-685–Gly-699. A helical membrane pass occupies residues Asn-700–Ala-722. Topologically, residues Lys-723–Asp-742 are extracellular. N-linked (GlcNAc...) asparagine glycosylation occurs at Asn-725. The segment at residues Phe-743 to Trp-763 is an intramembrane region (pore-forming). At Glu-764–Pro-773 the chain is on the extracellular side. The cysteines at positions 765 and 775 are disulfide-linked. The helical transmembrane segment at Leu-774–Leu-799 threads the bilayer. The Cytoplasmic segment spans residues Asn-800–Gln-1030. The segment at Asn-850–Ala-869 is disordered. An III repeat occupies Asn-1023–Leu-1320. A helical membrane pass occupies residues Ile-1031 to Ile-1053. Over Phe-1054–Lys-1067 the chain is Extracellular. The chain crosses the membrane as a helical span at residues Leu-1068–Phe-1093. Topologically, residues Arg-1094 to Ser-1099 are cytoplasmic. A helical membrane pass occupies residues Ala-1100–Thr-1117. Position 1118 (Asn-1118) is a topological domain, extracellular. A helical; Voltage-sensor transmembrane segment spans residues Leu-1119–Phe-1140. Over Glu-1141 to Asn-1159 the chain is Cytoplasmic. Residues Val-1160 to Gly-1181 traverse the membrane as a helical segment. Over Lys-1182–Val-1224 the chain is Extracellular. N-linked (GlcNAc...) asparagine glycosylation is found at Asn-1188, Asn-1197, Asn-1203, and Asn-1211. The segment at residues Gly-1225 to Ala-1246 is an intramembrane region (pore-forming). Residues Ala-1247–Asn-1262 lie on the Extracellular side of the membrane. Residues Leu-1263–Ile-1289 form a helical membrane-spanning segment. The Cytoplasmic segment spans residues Asp-1290–Asp-1342. The IV repeat unit spans residues Ile-1329 to Gln-1619. Residues Leu-1343–Ala-1366 traverse the membrane as a helical segment. At Glu-1367–Lys-1377 the chain is on the extracellular side. A helical membrane pass occupies residues Ile-1378–Leu-1401. Residues Arg-1402 to Thr-1407 lie on the Cytoplasmic side of the membrane. A helical transmembrane segment spans residues Asn-1408–Glu-1431. The Extracellular portion of the chain corresponds to Asn-1432 to Leu-1440. The helical; Voltage-sensor transmembrane segment at Phe-1441 to Arg-1463 threads the bilayer. The Cytoplasmic portion of the chain corresponds to Thr-1464–Asn-1478. Residues Ile-1479–Val-1501 traverse the membrane as a helical segment. Topologically, residues Lys-1502–Thr-1515 are extracellular. Positions Phe-1516 to Pro-1538 form an intramembrane region, pore-forming. At Met-1539–Ile-1559 the chain is on the extracellular side. The helical transmembrane segment at Ala-1560–Leu-1584 threads the bilayer. The Cytoplasmic segment spans residues Glu-1585–Asp-1765.

This sequence belongs to the sodium channel (TC 1.A.1.10) family. Nav1.9/SCN11A subfamily. The voltage-resistant sodium channel consists of an ion conducting pore forming alpha-subunit regulated by one or more auxiliary subunits SCN1B, SCN2B and SCN3B. Expressed in the dorsal root ganglia (C-fiber neurons), spinal cord, trigeminal ganglia, testis, ovary, uterus and small intestine.

It is found in the cell membrane. It carries out the reaction Na(+)(in) = Na(+)(out). Sodium channel mediating the voltage-dependent sodium ion permeability of excitable membranes. Assuming opened or closed conformations in response to the voltage difference across the membrane, the protein forms a sodium-selective channel through which sodium ions may pass in accordance with their electrochemical gradient. Involved in membrane depolarization during action potential in nociceptors which function as key relay stations for the electrical transmission of pain signals from the periphery to the central nervous system. Also involved in rapid BDNF-evoked neuronal depolarization. This Mus musculus (Mouse) protein is Sodium channel protein type 11 subunit alpha.